Here is a 136-residue protein sequence, read N- to C-terminus: Secreted RxLR effector protein 10 (136 aa).

An N-terminal signal peptide occupies residues 1–22 (MRVLNFVLTTTVVLLTSSEGIA). A RxLR-dEER motif is present at residues 42 to 56 (RSLRATENPGSDESR). A disordered region spans residues 42–78 (RSLRATENPGSDESRLNEKDTGFDPDGSSSKEDEDIG). A compositionally biased stretch (basic and acidic residues) spans 53-63 (DESRLNEKDTG).

Belongs to the RxLR effector family.

The protein localises to the secreted. Its subcellular location is the host cytoplasm. It is found in the host nucleus. Functionally, effector that acts as a broad suppressor of cell death to interrupt plant immunity. Inhibits cell death induced by cell death-inducing proteins, including the PAMP elicitor INF1 from P.infestans. The chain is Secreted RxLR effector protein 10 from Plasmopara viticola (Downy mildew of grapevine).